The following is a 262-amino-acid chain: Aminoglycoside 3'-phosphotransferase (262 aa).

D187 (proton acceptor) is an active-site residue.

Belongs to the aminoglycoside phosphotransferase family. As to quaternary structure, monomer.

It localises to the cytoplasm. It carries out the reaction kanamycin A + ATP = kanamycin 3'-phosphate + ADP + H(+). In terms of biological role, resistance to butirosin and structurally-related aminoglycosides, including kanamycin and amikacin. The protein is Aminoglycoside 3'-phosphotransferase of Niallia circulans (Bacillus circulans).